The following is a 150-amino-acid chain: Cilia- and flagella-associated protein 68 (150 aa).

Mn regions lie at residues 99–110 (TTYDTSYNNKMP) and 140–150 (KSTYMNSYSKP).

This sequence belongs to the CFAP68 family. In terms of assembly, microtubule inner protein component of sperm flagellar doublet microtubules.

It is found in the cytoplasm. The protein resides in the cytoskeleton. Its subcellular location is the cilium axoneme. The protein localises to the flagellum axoneme. It localises to the nucleus. It is found in the cell projection. The protein resides in the cilium. Its function is as follows. Microtubule inner protein (MIP) part of the dynein-decorated doublet microtubules (DMTs) in cilia axoneme, which is required for motile cilia beating. The protein is Cilia- and flagella-associated protein 68 of Homo sapiens (Human).